A 181-amino-acid chain; its full sequence is MLNEPLPSSMEDNPQFKEETSLQKFRRRLKEEPLIPLGCAATCYALYRAYRSMKAGDSVEMNKMFRARIYAQFFTLVAVVAGGMYFKTERQQRREFEKMVEQRKAQEKRDAWLRELEIRDKEDKDWRERHAAIEAAAKEAGKRPAPNKIPEQDAARSAIEPADEKSIGVLAAVRDLWMQQK.

Residues 6-97 enclose the HIG1 domain; it reads LPSSMEDNPQ…TERQQRREFE (92 aa). 2 helical membrane-spanning segments follow: residues 33–49 and 69–86; these read PLIPLGCAATCYALYRA and IYAQFFTLVAVVAGGMYF. Residues 136 to 160 are disordered; sequence AAKEAGKRPAPNKIPEQDAARSAIE.

This sequence belongs to the RCF1 family. In terms of assembly, associates with the respiratory chain complex III/complex IV supercomplex.

The protein resides in the mitochondrion membrane. Cytochrome c oxidase subunit which plays a role in assembly of respiratory supercomplexes. In Neosartorya fischeri (strain ATCC 1020 / DSM 3700 / CBS 544.65 / FGSC A1164 / JCM 1740 / NRRL 181 / WB 181) (Aspergillus fischerianus), this protein is Respiratory supercomplex factor 1, mitochondrial (rcf1).